We begin with the raw amino-acid sequence, 438 residues long: ATP-dependent RNA helicase RhlB (438 aa).

The Q motif signature appears at 9–37 (QRFADLPLHPEVKQALAENGFEFCTPIQA). A Helicase ATP-binding domain is found at 40–219 (LPVLLQSKDI…YDHMNEPVKV (180 aa)). 53-60 (AQTGTGKT) serves as a coordination point for ATP. A DEAD box motif is present at residues 165-168 (DEAD). The 148-residue stretch at 243 to 390 (KMRLLLTLIE…VSNYDSEALL (148 aa)) folds into the Helicase C-terminal domain. The segment at 395–438 (TPAKIHRKHPSGTRNLRDRSGASRPGAQRSGARPPRHDRTRRHS) is disordered. A compositionally biased stretch (basic residues) spans 428–438 (PPRHDRTRRHS).

Belongs to the DEAD box helicase family. RhlB subfamily. Component of the RNA degradosome, which is a multiprotein complex involved in RNA processing and mRNA degradation.

The protein localises to the cytoplasm. The enzyme catalyses ATP + H2O = ADP + phosphate + H(+). In terms of biological role, DEAD-box RNA helicase involved in RNA degradation. Has RNA-dependent ATPase activity and unwinds double-stranded RNA. This chain is ATP-dependent RNA helicase RhlB, found in Shewanella baltica (strain OS185).